The following is a 201-amino-acid chain: Small ribosomal subunit protein uS4 (201 aa).

The interval 19-41 (LVGGSSAYEKRPYPPGQHGRARI) is disordered. In terms of domain architecture, S4 RNA-binding spans 91-157 (SRLDNVVYRA…LPFEVARETA (67 aa)).

It belongs to the universal ribosomal protein uS4 family. As to quaternary structure, part of the 30S ribosomal subunit. Contacts protein S5. The interaction surface between S4 and S5 is involved in control of translational fidelity.

Its function is as follows. One of the primary rRNA binding proteins, it binds directly to 16S rRNA where it nucleates assembly of the body of the 30S subunit. With S5 and S12 plays an important role in translational accuracy. This Mycobacteroides abscessus (strain ATCC 19977 / DSM 44196 / CCUG 20993 / CIP 104536 / JCM 13569 / NCTC 13031 / TMC 1543 / L948) (Mycobacterium abscessus) protein is Small ribosomal subunit protein uS4.